A 434-amino-acid polypeptide reads, in one-letter code: Alpha-enolase (434 aa).

Serine 40 lines the Mg(2+) pocket. Residues histidine 158 and glutamate 167 each coordinate substrate. Catalysis depends on glutamate 210, which acts as the Proton donor. Aspartate 245, glutamate 293, and aspartate 318 together coordinate Mg(2+). Substrate contacts are provided by residues glutamate 293, aspartate 318, 370–373, and lysine 394; that span reads SHRS.

The protein belongs to the enolase family. Homodimer. Mg(2+) is required as a cofactor.

It localises to the cytoplasm. It carries out the reaction (2R)-2-phosphoglycerate = phosphoenolpyruvate + H2O. The protein operates within carbohydrate degradation; glycolysis; pyruvate from D-glyceraldehyde 3-phosphate: step 4/5. This Trachemys scripta elegans (Red-eared slider turtle) protein is Alpha-enolase.